The primary structure comprises 504 residues: Cytoplasmic dynein 1 light intermediate chain 1 (504 aa).

Gly-35–Ser-42 is a binding site for ATP. Low complexity-rich tracts occupy residues Thr-167–Thr-189, Asn-392–Leu-425, and Ser-437–Pro-446. Disordered stretches follow at residues Thr-167–Lys-195, Leu-383–Pro-446, and Asp-464–Lys-504. The span at Asp-464–Lys-473 shows a compositional bias: basic and acidic residues. A compositionally biased stretch (polar residues) spans Ser-475–Asn-487. The segment covering Ala-488–Lys-504 has biased composition (basic and acidic residues).

It belongs to the dynein light intermediate chain family. In terms of assembly, homodimer. The cytoplasmic dynein 1 complex consists of two catalytic heavy chains (HCs) and a number of non-catalytic subunits presented by intermediate chains (ICs), light intermediate chains (LICs) and light chains (LCs).

The protein resides in the cytoplasm. The protein localises to the cytoskeleton. Acts as one of several non-catalytic accessory components of the cytoplasmic dynein 1 complex that are thought to be involved in linking dynein to cargos and to adapter proteins that regulate dynein function. Cytoplasmic dynein 1 acts as a motor for the intracellular retrograde motility of vesicles and organelles along microtubules. May play a role in binding dynein to membranous organelles or chromosomes. This Dictyostelium discoideum (Social amoeba) protein is Cytoplasmic dynein 1 light intermediate chain 1 (dync1li1).